Consider the following 275-residue polypeptide: NH(3)-dependent NAD(+) synthetase (275 aa).

ATP is bound at residue 47-54 (GISGGQDS). Residue aspartate 53 coordinates Mg(2+). Position 141 (arginine 141) interacts with deamido-NAD(+). ATP is bound at residue threonine 161. Glutamate 166 contributes to the Mg(2+) binding site. Deamido-NAD(+) contacts are provided by lysine 174 and aspartate 181. Residues lysine 190 and threonine 212 each contribute to the ATP site. 261 to 262 (HK) contacts deamido-NAD(+).

This sequence belongs to the NAD synthetase family. In terms of assembly, homodimer.

It carries out the reaction deamido-NAD(+) + NH4(+) + ATP = AMP + diphosphate + NAD(+) + H(+). The protein operates within cofactor biosynthesis; NAD(+) biosynthesis; NAD(+) from deamido-NAD(+) (ammonia route): step 1/1. In terms of biological role, catalyzes the ATP-dependent amidation of deamido-NAD to form NAD. Uses ammonia as a nitrogen source. This chain is NH(3)-dependent NAD(+) synthetase, found in Lacticaseibacillus paracasei (strain ATCC 334 / BCRC 17002 / CCUG 31169 / CIP 107868 / KCTC 3260 / NRRL B-441) (Lactobacillus paracasei).